A 29-amino-acid polypeptide reads, in one-letter code: Cliotide T18 (29 aa).

Residues 1–29 (GLPICGETCFTGTCYTPGCTCSYPVCKKN) constitute a cross-link (cyclopeptide (Gly-Asn)). 3 cysteine pairs are disulfide-bonded: Cys5–Cys19, Cys9–Cys21, and Cys14–Cys26.

In terms of processing, contains 3 disulfide bonds. This is a cyclic peptide. Expressed in root nodules but not in seed.

Functionally, probably participates in a plant defense mechanism. The chain is Cliotide T18 from Clitoria ternatea (Butterfly pea).